Consider the following 694-residue polypeptide: Elongation factor G (694 aa).

Positions 8 to 287 constitute a tr-type G domain; sequence EDYRNFGIMA…AVISYLPSPV (280 aa). GTP is bound by residues 17–24, 86–90, and 140–143; these read AHIDAGKT, DTPGH, and NKMD.

This sequence belongs to the TRAFAC class translation factor GTPase superfamily. Classic translation factor GTPase family. EF-G/EF-2 subfamily.

Its subcellular location is the cytoplasm. Its function is as follows. Catalyzes the GTP-dependent ribosomal translocation step during translation elongation. During this step, the ribosome changes from the pre-translocational (PRE) to the post-translocational (POST) state as the newly formed A-site-bound peptidyl-tRNA and P-site-bound deacylated tRNA move to the P and E sites, respectively. Catalyzes the coordinated movement of the two tRNA molecules, the mRNA and conformational changes in the ribosome. The chain is Elongation factor G from Bartonella quintana (strain Toulouse) (Rochalimaea quintana).